A 276-amino-acid chain; its full sequence is NH(3)-dependent NAD(+) synthetase (276 aa).

ATP is bound at residue 43–50 (GISGGVDS). Aspartate 49 is a binding site for Mg(2+). Arginine 146 contributes to the deamido-NAD(+) binding site. Threonine 166 serves as a coordination point for ATP. Glutamate 171 contacts Mg(2+). Residues lysine 179 and aspartate 186 each contribute to the deamido-NAD(+) site. 2 residues coordinate ATP: lysine 195 and threonine 217. Deamido-NAD(+) is bound at residue 266-267 (HK).

The protein belongs to the NAD synthetase family. Homodimer.

The catalysed reaction is deamido-NAD(+) + NH4(+) + ATP = AMP + diphosphate + NAD(+) + H(+). It participates in cofactor biosynthesis; NAD(+) biosynthesis; NAD(+) from deamido-NAD(+) (ammonia route): step 1/1. Its function is as follows. Catalyzes the ATP-dependent amidation of deamido-NAD to form NAD. Uses ammonia as a nitrogen source. This Shewanella frigidimarina (strain NCIMB 400) protein is NH(3)-dependent NAD(+) synthetase.